The primary structure comprises 341 residues: Methionine import ATP-binding protein MetN 2 (341 aa).

In terms of domain architecture, ABC transporter spans 2–241 (IELKEVVKEY…PQHTVTKRFV (240 aa)). 38 to 45 (GFSGAGKS) serves as a coordination point for ATP.

It belongs to the ABC transporter superfamily. Methionine importer (TC 3.A.1.24) family. The complex is composed of two ATP-binding proteins (MetN), two transmembrane proteins (MetI) and a solute-binding protein (MetQ).

The protein resides in the cell membrane. It carries out the reaction L-methionine(out) + ATP + H2O = L-methionine(in) + ADP + phosphate + H(+). It catalyses the reaction D-methionine(out) + ATP + H2O = D-methionine(in) + ADP + phosphate + H(+). Its function is as follows. Part of the ABC transporter complex MetNIQ involved in methionine import. Responsible for energy coupling to the transport system. The protein is Methionine import ATP-binding protein MetN 2 of Staphylococcus aureus (strain USA300).